The sequence spans 89 residues: Small ribosomal subunit protein uS15 (89 aa).

It belongs to the universal ribosomal protein uS15 family. As to quaternary structure, part of the 30S ribosomal subunit. Forms a bridge to the 50S subunit in the 70S ribosome, contacting the 23S rRNA.

Its function is as follows. One of the primary rRNA binding proteins, it binds directly to 16S rRNA where it helps nucleate assembly of the platform of the 30S subunit by binding and bridging several RNA helices of the 16S rRNA. In terms of biological role, forms an intersubunit bridge (bridge B4) with the 23S rRNA of the 50S subunit in the ribosome. The polypeptide is Small ribosomal subunit protein uS15 (Thermodesulfovibrio yellowstonii (strain ATCC 51303 / DSM 11347 / YP87)).